Consider the following 560-residue polypeptide: ATP synthase subunit beta, mitochondrial (560 aa).

The N-terminal 54 residues, 1-54 (MASRRLLASLLRQSAQRGGGLISRSLGNSIPKSASRASSRASPKGFLLNRAVQY), are a transit peptide targeting the mitochondrion. 2 disordered regions span residues 20–44 (GLIS…ASPK) and 58–81 (AAAP…KITD). 2 stretches are compositionally biased toward low complexity: residues 33-42 (SASRASSRAS) and 58-71 (AAAP…PPKS). Residue 235-242 (GGAGVGKT) coordinates ATP.

The protein belongs to the ATPase alpha/beta chains family. As to quaternary structure, F-type ATPases have 2 components, CF(1) - the catalytic core - and CF(0) - the membrane proton channel. CF(1) has five subunits: alpha(3), beta(3), gamma(1), delta(1), epsilon(1). CF(0) has three main subunits: a, b and c.

The protein localises to the mitochondrion. The protein resides in the mitochondrion inner membrane. It carries out the reaction ATP + H2O + 4 H(+)(in) = ADP + phosphate + 5 H(+)(out). Mitochondrial membrane ATP synthase (F(1)F(0) ATP synthase or Complex V) produces ATP from ADP in the presence of a proton gradient across the membrane which is generated by electron transport complexes of the respiratory chain. F-type ATPases consist of two structural domains, F(1) - containing the extramembraneous catalytic core, and F(0) - containing the membrane proton channel, linked together by a central stalk and a peripheral stalk. During catalysis, ATP synthesis in the catalytic domain of F(1) is coupled via a rotary mechanism of the central stalk subunits to proton translocation. Subunits alpha and beta form the catalytic core in F(1). Rotation of the central stalk against the surrounding alpha(3)beta(3) subunits leads to hydrolysis of ATP in three separate catalytic sites on the beta subunits. This Nicotiana plumbaginifolia (Leadwort-leaved tobacco) protein is ATP synthase subunit beta, mitochondrial (ATPB).